The chain runs to 236 residues: (5-formylfuran-3-yl)methyl phosphate synthase (236 aa).

The active-site Schiff-base intermediate with substrate is the K27. K85 acts as the Proton acceptor in catalysis.

This sequence belongs to the MfnB family.

It carries out the reaction 2 D-glyceraldehyde 3-phosphate = 4-(hydroxymethyl)-2-furancarboxaldehyde phosphate + phosphate + 2 H2O. It functions in the pathway cofactor biosynthesis; methanofuran biosynthesis. In terms of biological role, catalyzes the formation of 4-(hydroxymethyl)-2-furancarboxaldehyde phosphate (4-HFC-P) from two molecules of glyceraldehyde-3-P (GA-3-P). This is (5-formylfuran-3-yl)methyl phosphate synthase from Methanococcus maripaludis (strain C6 / ATCC BAA-1332).